A 393-amino-acid polypeptide reads, in one-letter code: MKKLLKSVLVFAALSSASSLQALPVGNPAEPSLMIDGILWEGFGGDPCDPCTTWCDAISMRMGYYGDFVFDRVLQTDVNKEFQMGAKPTATTGNAAAPSTCTARENPAYGRHMQDAEMFTNAAYMALNIWDRFDVFCTLGATSGYLKGNSASFNLVGLFGDNENQSTVKKDAVPNMSFDQSVVELYTDTTFAWSVGARAALWECGCATLGASFQYAQSKPKVEELNVLCNAAEFTINKPKGYVGKEFPLDLTAGTDAATGTKDASIDYHEWQASLALSYRLNMFTPYIGVKWSRASFDADTIRIAQPKLATAIFDTTTLNPTIAGAGEVKANAEGQLGDTMQIVSLQLNKMKSRKSCGIAVGTTIVDADKYAVTVETRLIDERAAHVNAQFRF.

The N-terminal stretch at Met1–Ala22 is a signal peptide.

Belongs to the chlamydial porin (CP) (TC 1.B.2) family. Part of a disulfide cross-linked outer membrane complex (COMC) composed of the major outer membrane porin (MOMP), the small cysteine-rich protein (OmcA) and the large cysteine-rich periplasmic protein (OmcB).

The protein resides in the cell outer membrane. Functionally, in elementary bodies (EBs, the infectious stage, which is able to survive outside the host cell) provides the structural integrity of the outer envelope through disulfide cross-links with the small cysteine-rich protein and the large cysteine-rich periplasmic protein. It has been described in publications as the Sarkosyl-insoluble COMC (Chlamydia outer membrane complex), and serves as the functional equivalent of peptidoglycan. Permits diffusion of specific solutes through the outer membrane. This chain is Major outer membrane porin, serovar L1 (ompA), found in Chlamydia trachomatis.